The chain runs to 358 residues: Protein RecA (358 aa).

ATP is bound at residue 67-74; that stretch reads GPESSGKT.

This sequence belongs to the RecA family.

The protein localises to the cytoplasm. Can catalyze the hydrolysis of ATP in the presence of single-stranded DNA, the ATP-dependent uptake of single-stranded DNA by duplex DNA, and the ATP-dependent hybridization of homologous single-stranded DNAs. It interacts with LexA causing its activation and leading to its autocatalytic cleavage. The protein is Protein RecA of Xenorhabdus nematophila (strain ATCC 19061 / DSM 3370 / CCUG 14189 / LMG 1036 / NCIMB 9965 / AN6).